The primary structure comprises 72 residues: MTVVNTEIKFPTHLRAGDFAIIDGMVVEVTSVEYKPVDQAVYLKYRYHLHGNELSGASLISAYKAVRTLEVS.

The sequence is that of Gene 83 protein (83) from Mycobacterium phage L5 (Mycobacteriophage L5).